The primary structure comprises 285 residues: uncharacterized protein (285 aa).

Positions 1-25 are cleaved as a signal peptide; that stretch reads MVKKWLIQFAVMLSVLSTFTYSASA.

This is an uncharacterized protein from Bacillus subtilis (strain 168).